A 195-amino-acid polypeptide reads, in one-letter code: Putative nucleotidase BH1399 (195 aa).

This sequence belongs to the 5'(3')-deoxyribonucleotidase family.

The chain is Putative nucleotidase BH1399 from Halalkalibacterium halodurans (strain ATCC BAA-125 / DSM 18197 / FERM 7344 / JCM 9153 / C-125) (Bacillus halodurans).